A 730-amino-acid polypeptide reads, in one-letter code: Nitrogen fixation protein FixI (730 aa).

Residues M1–R101 lie on the Cytoplasmic side of the membrane. One can recognise an HMA domain in the interval K19–Y85. A metal cation is bound by residues C30 and C33. The chain crosses the membrane as a helical span at residues F102–P123. Topologically, residues V124–D138 are extracellular. The helical transmembrane segment at F139–S162 threads the bilayer. Topologically, residues A163–S168 are cytoplasmic. The chain crosses the membrane as a helical span at residues A169–V190. The Extracellular portion of the chain corresponds to V191 to F202. A helical membrane pass occupies residues D203–R223. Topologically, residues R224 to R352 are cytoplasmic. The helical transmembrane segment at A353–A375 threads the bilayer. Residues G376–A382 are Extracellular-facing. The chain crosses the membrane as a helical span at residues I383–L400. The Cytoplasmic segment spans residues A401–M676. Catalysis depends on D438, which acts as the 4-aspartylphosphate intermediate. Positions 622 and 626 each coordinate Mg(2+). Residues R677–S696 traverse the membrane as a helical segment. The Extracellular segment spans residues G697–P701. The chain crosses the membrane as a helical span at residues L702–L720. At R721–V730 the chain is on the cytoplasmic side.

This sequence belongs to the cation transport ATPase (P-type) (TC 3.A.3) family. Type IB subfamily.

The protein localises to the cell membrane. It carries out the reaction ATP + H2O = ADP + phosphate + H(+). In terms of biological role, fixI is a pump of a specific cation involved in symbiotic nitrogen fixation. The four proteins FixG, FixH, FixI, and FixS may participate in a membrane-bound complex coupling the FixI cation pump with a redox process catalyzed by FixG. The polypeptide is Nitrogen fixation protein FixI (fixI) (Bradyrhizobium diazoefficiens (strain JCM 10833 / BCRC 13528 / IAM 13628 / NBRC 14792 / USDA 110)).